The sequence spans 483 residues: Probable cytochrome P450 517A4 (483 aa).

A helical membrane pass occupies residues 1 to 21 (MEIVNVLLFLIILFLVKDFVK). A heme-binding site is contributed by cysteine 429.

Belongs to the cytochrome P450 family. Heme serves as cofactor.

Its subcellular location is the membrane. The protein is Probable cytochrome P450 517A4 (cyp517A4) of Dictyostelium discoideum (Social amoeba).